Reading from the N-terminus, the 258-residue chain is uncharacterized protein (258 aa).

Positions 16 to 148 (EAFDSFEYAE…VLRALNFDTH (133 aa)) constitute a Cyclin N-terminal domain.

The protein belongs to the cyclin family. Cyclin L subfamily.

The protein resides in the cytoplasm. It localises to the nucleus. This is an uncharacterized protein from Schizosaccharomyces pombe (strain 972 / ATCC 24843) (Fission yeast).